The primary structure comprises 254 residues: Bacteriorhodopsin-I (254 aa).

Residues 1 to 6 constitute a propeptide that is removed on maturation; that stretch reads MSQLAL. Pyrrolidone carboxylic acid is present on glutamine 7. 7 helical membrane-spanning segments follow: residues 16–36, 51–71, 91–111, 116–136, 144–164, 185–205, and 212–232; these read EGIWLALGTIGMLLGMLYFIA, VITILIPAIAAASYLSMFFGF, YADWLFTTPLLLLDIGLLAGA, IGALVGIDAFMIVTGLVATLT, AFWTISTISMVFLLYYLVAVF, IILVTWAIYPVAWLVGTEGLA, and ETLLFMVLDLVAKVGFGFILL. Lysine 224 carries the N6-(retinylidene)lysine modification.

It belongs to the archaeal/bacterial/fungal opsin family. In terms of processing, the covalent binding of retinal to the apoprotein, bacterioopsin, generates bacteriorhodopsin.

Its subcellular location is the cell membrane. Its function is as follows. Light-driven proton pump. The sequence is that of Bacteriorhodopsin-I (bop1) from Haloquadratum walsbyi (strain DSM 16854 / JCM 12705 / C23).